Reading from the N-terminus, the 476-residue chain is Proline--tRNA ligase 2 (476 aa).

Belongs to the class-II aminoacyl-tRNA synthetase family. ProS type 3 subfamily. In terms of assembly, homodimer.

The protein resides in the cytoplasm. It carries out the reaction tRNA(Pro) + L-proline + ATP = L-prolyl-tRNA(Pro) + AMP + diphosphate. In terms of biological role, catalyzes the attachment of proline to tRNA(Pro) in a two-step reaction: proline is first activated by ATP to form Pro-AMP and then transferred to the acceptor end of tRNA(Pro). This Bacillus cereus (strain ATCC 10987 / NRS 248) protein is Proline--tRNA ligase 2.